Consider the following 259-residue polypeptide: Putative protein-tyrosine sulfotransferase (259 aa).

An intrachain disulfide couples Cys-13 to Cys-68. Catalysis depends on Glu-16, which acts as the Proton donor/acceptor. The N-linked (GlcNAc...) asparagine glycan is linked to Asn-36. Positions 95, 103, and 107 each coordinate 3'-phosphoadenylyl sulfate. An N-linked (GlcNAc...) asparagine glycan is attached at Asn-115. Cys-137 and Cys-144 are oxidised to a cystine. Residues Tyr-149 and 194-203 each bind 3'-phosphoadenylyl sulfate; that span reads SASQVKNSIN.

This sequence belongs to the protein sulfotransferase family.

It catalyses the reaction L-tyrosyl-[protein] + 3'-phosphoadenylyl sulfate = O-sulfo-L-tyrosine-[protein] + adenosine 3',5'-bisphosphate + H(+). In terms of biological role, catalyzes the O-sulfation of tyrosine residues within acidic motifs of polypeptides, using 3'-phosphoadenylyl sulfate (PAPS) as cosubstrate. The protein is Putative protein-tyrosine sulfotransferase (tpst-2) of Caenorhabditis elegans.